Consider the following 65-residue polypeptide: Large ribosomal subunit protein bL35 (65 aa).

The disordered stretch occupies residues 1–65; sequence MPKIKTNRAA…GRLDRMLPYL (65 aa). Residues 10–44 show a composition bias toward basic residues; that stretch reads AAKRFRKTASGKYKAGHANRSHILTKKATKRKRNL. Positions 50–65 are enriched in basic and acidic residues; sequence VRAEDAGRLDRMLPYL.

The protein belongs to the bacterial ribosomal protein bL35 family.

This chain is Large ribosomal subunit protein bL35, found in Xylella fastidiosa (strain M23).